Consider the following 141-residue polypeptide: Auxin-responsive protein SAUR62 (141 aa).

This sequence belongs to the ARG7 family. In terms of tissue distribution, expressed in stamen filaments and petals.

The protein localises to the cell membrane. In terms of biological role, may promote auxin-stimulated organ elongation, such as hypocotyls, stamen filaments and petals. This chain is Auxin-responsive protein SAUR62, found in Arabidopsis thaliana (Mouse-ear cress).